Here is a 73-residue protein sequence, read N- to C-terminus: Translation initiation factor IF-1 (73 aa).

Residues 1 to 72 (MAKQDVIEME…TKGRITYRLR (72 aa)) enclose the S1-like domain.

It belongs to the IF-1 family. Component of the 30S ribosomal translation pre-initiation complex which assembles on the 30S ribosome in the order IF-2 and IF-3, IF-1 and N-formylmethionyl-tRNA(fMet); mRNA recruitment can occur at any time during PIC assembly.

It localises to the cytoplasm. In terms of biological role, one of the essential components for the initiation of protein synthesis. Stabilizes the binding of IF-2 and IF-3 on the 30S subunit to which N-formylmethionyl-tRNA(fMet) subsequently binds. Helps modulate mRNA selection, yielding the 30S pre-initiation complex (PIC). Upon addition of the 50S ribosomal subunit IF-1, IF-2 and IF-3 are released leaving the mature 70S translation initiation complex. In Gloeobacter violaceus (strain ATCC 29082 / PCC 7421), this protein is Translation initiation factor IF-1.